An 873-amino-acid polypeptide reads, in one-letter code: Leucine--tRNA ligase (873 aa).

The 'HIGH' region signature appears at 48–58; that stretch reads PYPSGKLHMGH. The 'KMSKS' region motif lies at 636 to 640; the sequence is KMSKS. An ATP-binding site is contributed by Lys-639.

This sequence belongs to the class-I aminoacyl-tRNA synthetase family.

The protein resides in the cytoplasm. The catalysed reaction is tRNA(Leu) + L-leucine + ATP = L-leucyl-tRNA(Leu) + AMP + diphosphate. The protein is Leucine--tRNA ligase of Cupriavidus pinatubonensis (strain JMP 134 / LMG 1197) (Cupriavidus necator (strain JMP 134)).